Reading from the N-terminus, the 439-residue chain is Phosphomethylpyrimidine synthase (439 aa).

Substrate-binding positions include Asn-67, Met-96, Tyr-126, His-165, 187 to 189 (SRG), 228 to 231 (DSLR), and Glu-267. Residue His-271 coordinates Zn(2+). Tyr-294 is a binding site for substrate. His-335 contacts Zn(2+). [4Fe-4S] cluster contacts are provided by Cys-411, Cys-414, and Cys-418.

Belongs to the ThiC family. Requires [4Fe-4S] cluster as cofactor.

The catalysed reaction is 5-amino-1-(5-phospho-beta-D-ribosyl)imidazole + S-adenosyl-L-methionine = 4-amino-2-methyl-5-(phosphooxymethyl)pyrimidine + CO + 5'-deoxyadenosine + formate + L-methionine + 3 H(+). Its pathway is cofactor biosynthesis; thiamine diphosphate biosynthesis. Its function is as follows. Catalyzes the synthesis of the hydroxymethylpyrimidine phosphate (HMP-P) moiety of thiamine from aminoimidazole ribotide (AIR) in a radical S-adenosyl-L-methionine (SAM)-dependent reaction. The protein is Phosphomethylpyrimidine synthase of Ignicoccus hospitalis (strain KIN4/I / DSM 18386 / JCM 14125).